Reading from the N-terminus, the 687-residue chain is Threonine--tRNA ligase (687 aa).

One can recognise a TGS domain in the interval 1–67; that stretch reads MAHLIEAAPN…EQDSKFTPVP (67 aa). The interval 266–572 is catalytic; that stretch reads DHRRLGAELD…LLEHYAGAFP (307 aa). Positions 371, 422, and 549 each coordinate Zn(2+).

Belongs to the class-II aminoacyl-tRNA synthetase family. Homodimer. The cofactor is Zn(2+).

The protein localises to the cytoplasm. The catalysed reaction is tRNA(Thr) + L-threonine + ATP = L-threonyl-tRNA(Thr) + AMP + diphosphate + H(+). Functionally, catalyzes the attachment of threonine to tRNA(Thr) in a two-step reaction: L-threonine is first activated by ATP to form Thr-AMP and then transferred to the acceptor end of tRNA(Thr). Also edits incorrectly charged L-seryl-tRNA(Thr). The sequence is that of Threonine--tRNA ligase from Corynebacterium diphtheriae (strain ATCC 700971 / NCTC 13129 / Biotype gravis).